Here is a 207-residue protein sequence, read N- to C-terminus: PITH domain-containing protein P35G2.02 (207 aa).

Residues 13–189 (EHPFESGPND…PVVTIYEATP (177 aa)) form the PITH domain.

This sequence belongs to the PITHD1 family.

It is found in the cytoplasm. It localises to the nucleus. This chain is PITH domain-containing protein P35G2.02, found in Schizosaccharomyces pombe (strain 972 / ATCC 24843) (Fission yeast).